The sequence spans 341 residues: N-acetyl-gamma-glutamyl-phosphate reductase (341 aa).

The active site involves Cys145.

The protein belongs to the NAGSA dehydrogenase family. Type 1 subfamily.

Its subcellular location is the cytoplasm. It carries out the reaction N-acetyl-L-glutamate 5-semialdehyde + phosphate + NADP(+) = N-acetyl-L-glutamyl 5-phosphate + NADPH + H(+). It participates in amino-acid biosynthesis; L-arginine biosynthesis; N(2)-acetyl-L-ornithine from L-glutamate: step 3/4. Functionally, catalyzes the NADPH-dependent reduction of N-acetyl-5-glutamyl phosphate to yield N-acetyl-L-glutamate 5-semialdehyde. The sequence is that of N-acetyl-gamma-glutamyl-phosphate reductase from Methanothrix thermoacetophila (strain DSM 6194 / JCM 14653 / NBRC 101360 / PT) (Methanosaeta thermophila).